The sequence spans 830 residues: Periplasmic nitrate reductase (830 aa).

A signal peptide (tat-type signal) is located at residues 1-31; sequence MKLSRRDFMKANAAVAAAAAAGMTIPTVAKA. Positions 39-95 constitute a 4Fe-4S Mo/W bis-MGD-type domain; that stretch reads IKWDKAPCRFCGTGCGVLVGTQNGRIVASQGDPDSPVNRGLNCIKGYFLPKIMYGKD. 4 residues coordinate [4Fe-4S] cluster: cysteine 46, cysteine 49, cysteine 53, and cysteine 81. Residues lysine 83, glutamine 150, asparagine 175, cysteine 179, 212–219, 243–247, 262–264, methionine 372, glutamine 376, asparagine 482, 508–509, lysine 531, aspartate 558, and 718–727 each bind Mo-bis(molybdopterin guanine dinucleotide); these read WGSNMAEM, STYEH, QTD, SD, and TGRVLEHWHT. Phenylalanine 794 contacts substrate. Mo-bis(molybdopterin guanine dinucleotide) contacts are provided by asparagine 802 and lysine 819.

The protein belongs to the prokaryotic molybdopterin-containing oxidoreductase family. NasA/NapA/NarB subfamily. Component of the periplasmic nitrate reductase NapAB complex composed of NapA and NapB. The cofactor is [4Fe-4S] cluster. Mo-bis(molybdopterin guanine dinucleotide) is required as a cofactor. In terms of processing, predicted to be exported by the Tat system. The position of the signal peptide cleavage has not been experimentally proven.

The protein resides in the periplasm. It carries out the reaction 2 Fe(II)-[cytochrome] + nitrate + 2 H(+) = 2 Fe(III)-[cytochrome] + nitrite + H2O. Its function is as follows. Catalytic subunit of the periplasmic nitrate reductase complex NapAB. Receives electrons from NapB and catalyzes the reduction of nitrate to nitrite. The chain is Periplasmic nitrate reductase from Yersinia pestis bv. Antiqua (strain Antiqua).